A 587-amino-acid polypeptide reads, in one-letter code: Transport inhibitor response 1-like protein Os05g0150500 (587 aa).

Residues 6-63 (SRAACAAAAPPWHSLPDEVWEHAFSFLPAAADRGAAAGACSSWLRAERRSRRRLAVAN) enclose the F-box domain. 1D-myo-inositol hexakisphosphate is bound at residue Lys-85. Positions 92 to 93 (DF) are interaction with auxin-responsive proteins. Residues 124-125 (KR) and Arg-355 contribute to the 1D-myo-inositol hexakisphosphate site. An interaction with auxin-responsive proteins region spans residues 358-363 (PSDPFG). 409-411 (CFR) contributes to the 1D-myo-inositol hexakisphosphate binding site. The interval 413–417 (CILEP) is interaction with auxin-responsive proteins. Arg-444 contacts 1D-myo-inositol hexakisphosphate. The interval 472 to 473 (AF) is interaction with auxin-responsive proteins. 1D-myo-inositol hexakisphosphate contacts are provided by residues 492 to 493 (KK) and Arg-517.

Part of a SCF (SKP1-cullin-F-box) protein ligase complex. May interact with auxin and auxin-responsive proteins.

It is found in the nucleus. It participates in protein modification; protein ubiquitination. This Oryza sativa subsp. japonica (Rice) protein is Transport inhibitor response 1-like protein Os05g0150500.